The primary structure comprises 485 residues: Peroxisomal catalase (485 aa).

Catalysis depends on residues His53 and Asn126. Tyr336 provides a ligand contact to heme.

Belongs to the catalase family. As to quaternary structure, homotetramer. It depends on heme as a cofactor.

The protein localises to the peroxisome matrix. It carries out the reaction 2 H2O2 = O2 + 2 H2O. Catalyzes the degradation of hydrogen peroxide (H(2)O(2)) generated by peroxisomal oxidases to water and oxygen, thereby protecting cells from the toxic effects of hydrogen peroxide. The sequence is that of Peroxisomal catalase (POX9) from Candida tropicalis (Yeast).